Here is a 244-residue protein sequence, read N- to C-terminus: Carboxy-S-adenosyl-L-methionine synthase (244 aa).

S-adenosyl-L-methionine is bound by residues Tyr-41, 66 to 68 (GCS), 91 to 92 (DN), 119 to 120 (DI), Asn-134, and Arg-201.

The protein belongs to the class I-like SAM-binding methyltransferase superfamily. Cx-SAM synthase family. As to quaternary structure, homodimer.

It carries out the reaction prephenate + S-adenosyl-L-methionine = carboxy-S-adenosyl-L-methionine + 3-phenylpyruvate + H2O. Functionally, catalyzes the conversion of S-adenosyl-L-methionine (SAM) to carboxy-S-adenosyl-L-methionine (Cx-SAM). The chain is Carboxy-S-adenosyl-L-methionine synthase from Photobacterium profundum (strain SS9).